The primary structure comprises 1098 residues: Beta-alanine-activating enzyme (1098 aa).

ATP is bound by residues 198 to 206, Asp428, Arg442, and Lys527; that span reads TSGTTGIPK. One can recognise a Carrier domain in the interval 553 to 630; the sequence is EDLWEKLQYL…EIYNHILQTV (78 aa). The residue at position 589 (Ser589) is an O-(pantetheine 4'-phosphoryl)serine. Residues Ser649 and Ser724 each carry the phosphoserine modification.

It belongs to the ATP-dependent AMP-binding enzyme family. In terms of tissue distribution, ubiquitously expressed in adult tissues.

Functionally, covalently binds beta-alanine in an ATP-dependent manner to form a thioester bond with its phosphopantetheine group and transfers it to an, as yet, unknown acceptor. May be required for a post-translational protein modification or for post-transcriptional modification of an RNA. The protein is Beta-alanine-activating enzyme (AASDH) of Homo sapiens (Human).